A 271-amino-acid chain; its full sequence is Peroxiredoxin-4 (271 aa).

The first 37 residues, 1–37 (MEALPLLAATTPDHGRHRRLLLLPLLLFLLPAGAVQG), serve as a signal peptide directing secretion. The region spanning 79-237 (AKISKPAPYW…TLRLVQAFQY (159 aa)) is the Thioredoxin domain. Residue Cys-124 is the Cysteine sulfenic acid (-SOH) intermediate of the active site.

Belongs to the peroxiredoxin family. AhpC/Prx1 subfamily. In terms of assembly, homodimer; disulfide-linked, upon oxidation. 5 homodimers assemble to form a ring-like decamer. Can form heterodimers with PRDX1. Post-translationally, the enzyme can be inactivated by further oxidation of the cysteine sulfenic acid (C(P)-SOH) to sulphinic acid (C(P)-SO2H) and sulphonic acid (C(P)-SO3H) instead of its condensation to a disulfide bond.

It is found in the cytoplasm. It localises to the endoplasmic reticulum. The enzyme catalyses a hydroperoxide + [thioredoxin]-dithiol = an alcohol + [thioredoxin]-disulfide + H2O. Thiol-specific peroxidase that catalyzes the reduction of hydrogen peroxide and organic hydroperoxides to water and alcohols, respectively. Plays a role in cell protection against oxidative stress by detoxifying peroxides and as sensor of hydrogen peroxide-mediated signaling events. Regulates the activation of NF-kappa-B in the cytosol by a modulation of I-kappa-B-alpha phosphorylation. The protein is Peroxiredoxin-4 (PRDX4) of Homo sapiens (Human).